The primary structure comprises 409 residues: FAD-dependent monooxygenase phnB (409 aa).

FAD contacts are provided by Glu35, Ala50, Arg110, and Asp311.

It belongs to the paxM FAD-dependent monooxygenase family. The cofactor is FAD.

The catalysed reaction is 3,6,7,9-tetrahydroxy-3-methyl-2,3-dihydro-1H-naphtho[2,1-b]pyran-1-one + NADPH + O2 + H(+) = 2,3,4,7,9-pentahydroxy-6-methyl-1H-phenalen-1-one + NADP(+) + 2 H2O. It functions in the pathway secondary metabolite biosynthesis. Functionally, FAD-dependent monooxygenase; part of the gene cluster that mediates the biosynthesis of phenalenones such as herqueinone, compounds that have been reported to treat tumors, bacterial infections and/or mycoses, and rheumatic diseases. The non-reducing polyketide synthase phnA synthesizes the heptaketide backbone and cyclizes it into the angular, hemiketal-containing naphtho-gamma-pyrone prephenalenone. The product template (PT) domain of phnA catalyzes only the C4-C9 aldol condensation, which is unprecedented among known PT domains. The transformation of prephenalenone to phenalenones requires an FAD-dependent monooxygenase phnB, which catalyzes the C2 aromatic hydroxylation of prephenalenone and ring opening of the gamma-pyrone ring simultaneously. Subsequent intramolecular deprotonation of C3 phenolic oxygen accelerates phenalenone ring closure to yield the tricyclic phenalenone core with a C2 hydroxylation. The prenyltransferase phnF further catalyzes reverse C-prenylation of phenalenone by direct electrophilic substitution at C6, or possibly via first a forward O-prenylation of a neighboring phenol in phenalenone, followed by a Claisen rearrangement. The hydroalkoxylation enzyme phnH catalyzes the 5-exo-trig cyclization via acid catalysis after the spontaneous deprotonation of 7-OH, which leads to the formation of the dihydrobenzofuran atrovenetin. Atrovenetin is further converted to deoxyherqueinone by the O-methyltransferase phnC which can methylate C2-OH to stabilize the northern portion of the phenalenone core. Finally, the oxidoreductase phnG converts deoxyherqueinone to herqueinone via C6 hydroxylation. In Penicillium herquei, this protein is FAD-dependent monooxygenase phnB.